The sequence spans 506 residues: DEAD-box ATP-dependent RNA helicase CshA (506 aa).

Positions 2 to 30 (QNFKELGISDNTVQSLESMGFKEPTPIQK) match the Q motif motif. Positions 33 to 203 (IPYALQGIDI…QQFMKSPKII (171 aa)) constitute a Helicase ATP-binding domain. An ATP-binding site is contributed by 46–53 (AQTGTGKT). Positions 150-153 (DEAD) match the DEAD box motif. In terms of domain architecture, Helicase C-terminal spans 214–375 (QIEEFYTIVK…LRPPHRKEVL (162 aa)). The disordered stretch occupies residues 436–506 (EKPLSRKGRN…KGRTFADHQK (71 aa)). The segment covering 468 to 480 (KRSKGYSSKKKST) has biased composition (basic residues).

This sequence belongs to the DEAD box helicase family. CshA subfamily. As to quaternary structure, oligomerizes, may be a member of the RNA degradosome.

The protein resides in the cytoplasm. It catalyses the reaction ATP + H2O = ADP + phosphate + H(+). Functionally, DEAD-box RNA helicase possibly involved in RNA degradation. Unwinds dsRNA in both 5'- and 3'-directions, has RNA-dependent ATPase activity. The protein is DEAD-box ATP-dependent RNA helicase CshA of Staphylococcus aureus (strain bovine RF122 / ET3-1).